The primary structure comprises 445 residues: 4-hydroxyphenylpyruvate dioxygenase (445 aa).

Polar residues predominate over residues 1-11; the sequence is MGHQNAAVSEN. Positions 1–20 are disordered; that stretch reads MGHQNAAVSENQNHDDGAAS. 2 consecutive VOC domains span residues 46–192 and 223–383; these read RFHH…YVSY and RLDH…IFTK. 3 residues coordinate Fe cation: His226, His308, and Glu394.

It belongs to the 4HPPD family. In terms of assembly, homodimer. Fe cation serves as cofactor.

Its subcellular location is the cytoplasm. The catalysed reaction is 3-(4-hydroxyphenyl)pyruvate + O2 = homogentisate + CO2. It functions in the pathway amino-acid degradation; L-phenylalanine degradation; acetoacetate and fumarate from L-phenylalanine: step 3/6. Its pathway is cofactor biosynthesis; prenylquinone biosynthesis. In terms of biological role, catalyzes the conversion of 4-hydroxyphenylpyruvic acid to homogentisic acid, one of the steps in tyrosine catabolism. This is 4-hydroxyphenylpyruvate dioxygenase (HPD) from Arabidopsis thaliana (Mouse-ear cress).